The following is a 596-amino-acid chain: Aspartate--tRNA(Asp/Asn) ligase (596 aa).

Glutamate 173 provides a ligand contact to L-aspartate. Residues 197-200 (QLFK) are aspartate. Arginine 219 lines the L-aspartate pocket. Residues 219-221 (RDE) and glutamine 228 contribute to the ATP site. Residue histidine 450 participates in L-aspartate binding. Position 485 (glutamate 485) interacts with ATP. Position 492 (arginine 492) interacts with L-aspartate. 537–540 (GLDR) contributes to the ATP binding site.

Belongs to the class-II aminoacyl-tRNA synthetase family. Type 1 subfamily. In terms of assembly, homodimer.

Its subcellular location is the cytoplasm. The catalysed reaction is tRNA(Asx) + L-aspartate + ATP = L-aspartyl-tRNA(Asx) + AMP + diphosphate. Its function is as follows. Aspartyl-tRNA synthetase with relaxed tRNA specificity since it is able to aspartylate not only its cognate tRNA(Asp) but also tRNA(Asn). Reaction proceeds in two steps: L-aspartate is first activated by ATP to form Asp-AMP and then transferred to the acceptor end of tRNA(Asp/Asn). The chain is Aspartate--tRNA(Asp/Asn) ligase from Hydrogenovibrio crunogenus (strain DSM 25203 / XCL-2) (Thiomicrospira crunogena).